The chain runs to 369 residues: Flagellar P-ring protein (369 aa).

Positions 1–23 are cleaved as a signal peptide; it reads MRIASFFTVLLTLLTLNITPASA.

It belongs to the FlgI family. In terms of assembly, the basal body constitutes a major portion of the flagellar organelle and consists of four rings (L,P,S, and M) mounted on a central rod.

The protein resides in the periplasm. The protein localises to the bacterial flagellum basal body. Its function is as follows. Assembles around the rod to form the L-ring and probably protects the motor/basal body from shearing forces during rotation. The polypeptide is Flagellar P-ring protein (Pectobacterium atrosepticum (strain SCRI 1043 / ATCC BAA-672) (Erwinia carotovora subsp. atroseptica)).